A 361-amino-acid chain; its full sequence is dTDP-glucose 4,6-dehydratase 1 (361 aa).

NAD(+) contacts are provided by residues 11 to 12, 32 to 35, 58 to 59, 80 to 84, and Thr-99; these read FI, DKLT, DI, and LAAES. Ser-84 lines the substrate pocket. Thr-133 lines the substrate pocket. The active-site Proton donor is the Asp-134. Residues Glu-135 and Tyr-167 each act as proton acceptor in the active site. 167 to 171 serves as a coordination point for NAD(+); the sequence is YSASK. Asn-196 is a binding site for substrate. NAD(+) is bound at residue Asn-197. Residues 206-207, 222-224, Arg-231, Asn-266, and 296-300 contribute to the substrate site; these read KL, PIY, and DRPGH.

The protein belongs to the NAD(P)-dependent epimerase/dehydratase family. dTDP-glucose dehydratase subfamily. As to quaternary structure, homodimer. The cofactor is NAD(+).

It catalyses the reaction dTDP-alpha-D-glucose = dTDP-4-dehydro-6-deoxy-alpha-D-glucose + H2O. It participates in carbohydrate biosynthesis; dTDP-L-rhamnose biosynthesis. The protein operates within bacterial outer membrane biogenesis; LPS O-antigen biosynthesis. Catalyzes the dehydration of dTDP-D-glucose to form dTDP-6-deoxy-D-xylo-4-hexulose via a three-step process involving oxidation, dehydration and reduction. The chain is dTDP-glucose 4,6-dehydratase 1 (rfbB) from Escherichia coli (strain K12).